We begin with the raw amino-acid sequence, 390 residues long: Succinate--CoA ligase [ADP-forming] subunit beta (390 aa).

Residues 9–244 (KEILKRYGVN…ETQTDTSENE (236 aa)) form the ATP-grasp domain. ATP-binding positions include Lys-46, 53-55 (GRG), Glu-99, Leu-102, and Glu-107. Mg(2+) is bound by residues Asn-199 and Asp-213. Residues Asn-264 and 321–323 (GIV) each bind substrate.

Belongs to the succinate/malate CoA ligase beta subunit family. Heterotetramer of two alpha and two beta subunits. Mg(2+) is required as a cofactor.

The catalysed reaction is succinate + ATP + CoA = succinyl-CoA + ADP + phosphate. It catalyses the reaction GTP + succinate + CoA = succinyl-CoA + GDP + phosphate. The protein operates within carbohydrate metabolism; tricarboxylic acid cycle; succinate from succinyl-CoA (ligase route): step 1/1. Functionally, succinyl-CoA synthetase functions in the citric acid cycle (TCA), coupling the hydrolysis of succinyl-CoA to the synthesis of either ATP or GTP and thus represents the only step of substrate-level phosphorylation in the TCA. The beta subunit provides nucleotide specificity of the enzyme and binds the substrate succinate, while the binding sites for coenzyme A and phosphate are found in the alpha subunit. The polypeptide is Succinate--CoA ligase [ADP-forming] subunit beta (Campylobacter curvus (strain 525.92)).